Reading from the N-terminus, the 404-residue chain is NADH-quinone oxidoreductase subunit D 1 (404 aa).

Belongs to the complex I 49 kDa subunit family. As to quaternary structure, NDH-1 is composed of 14 different subunits. Subunits NuoB, C, D, E, F, and G constitute the peripheral sector of the complex.

It localises to the cell membrane. It carries out the reaction a quinone + NADH + 5 H(+)(in) = a quinol + NAD(+) + 4 H(+)(out). In terms of biological role, NDH-1 shuttles electrons from NADH, via FMN and iron-sulfur (Fe-S) centers, to quinones in the respiratory chain. The immediate electron acceptor for the enzyme in this species is believed to be a menaquinone. Couples the redox reaction to proton translocation (for every two electrons transferred, four hydrogen ions are translocated across the cytoplasmic membrane), and thus conserves the redox energy in a proton gradient. In Symbiobacterium thermophilum (strain DSM 24528 / JCM 14929 / IAM 14863 / T), this protein is NADH-quinone oxidoreductase subunit D 1.